Reading from the N-terminus, the 364-residue chain is Dihydroorotate dehydrogenase (quinone) (364 aa).

FMN contacts are provided by residues 61-65 and Thr-85; that span reads AGFDK. Lys-65 is a binding site for substrate. 110-114 contacts substrate; that stretch reads NRMGF. Positions 139 and 170 each coordinate FMN. Asn-170 is a binding site for substrate. Ser-173 acts as the Nucleophile in catalysis. Asn-175 contacts substrate. 2 residues coordinate FMN: Lys-214 and Ala-242. 243–244 serves as a coordination point for substrate; it reads NT. Residues Gly-266, Gly-295, and 316-317 contribute to the FMN site; that span reads YS.

Belongs to the dihydroorotate dehydrogenase family. Type 2 subfamily. Monomer. The cofactor is FMN.

The protein resides in the cell membrane. The enzyme catalyses (S)-dihydroorotate + a quinone = orotate + a quinol. The protein operates within pyrimidine metabolism; UMP biosynthesis via de novo pathway; orotate from (S)-dihydroorotate (quinone route): step 1/1. In terms of biological role, catalyzes the conversion of dihydroorotate to orotate with quinone as electron acceptor. This Rhodopseudomonas palustris (strain ATCC BAA-98 / CGA009) protein is Dihydroorotate dehydrogenase (quinone).